Reading from the N-terminus, the 1580-residue chain is Transcriptional activator GLI3 (1580 aa).

Met-1 carries the post-translational modification N-acetylmethionine. Polar residues-rich tracts occupy residues Met-1–Thr-10 and Ile-58–Ser-78. Positions Met-1 to Ser-79 are disordered. The residue at position 175 (Arg-175) is an Omega-N-methylarginine. The disordered stretch occupies residues Gln-368 to Glu-475. Residues Asn-401–Gly-427 show a composition bias toward polar residues. Glycyl lysine isopeptide (Lys-Gly) (interchain with G-Cter in SUMO2) cross-links involve residues Lys-438 and Lys-462. The span at Val-461–Pro-474 shows a compositional bias: basic and acidic residues. C2H2-type zinc fingers lie at residues Thr-480–His-505, Phe-513–His-540, His-546–His-570, Tyr-576–His-601, and Tyr-607–His-632. The interval Asp-620 to Leu-728 is disordered. The segment covering His-632–Pro-648 has biased composition (basic and acidic residues). Residue Ser-664 is modified to Phosphoserine. Positions Ser-684 to Lys-699 are enriched in basic and acidic residues. Low complexity predominate over residues Ser-703 to Ser-726. A mediates interaction with DZIP1 region spans residues Asp-745 to Asn-845. Lys-773 participates in a covalent cross-link: Glycyl lysine isopeptide (Lys-Gly) (interchain with G-Cter in ubiquitin). Lys-779 participates in a covalent cross-link: Glycyl lysine isopeptide (Lys-Gly) (interchain with G-Cter in SUMO2); alternate. Lys-779 participates in a covalent cross-link: Glycyl lysine isopeptide (Lys-Gly) (interchain with G-Cter in ubiquitin); alternate. Residues Lys-784 and Lys-800 each participate in a glycyl lysine isopeptide (Lys-Gly) (interchain with G-Cter in ubiquitin) cross-link. 4 positions are modified to phosphoserine; by PKA: Ser-849, Ser-865, Ser-877, and Ser-907. A compositionally biased stretch (low complexity) spans Arg-863–Ala-882. The interval Arg-863–Leu-918 is disordered. The span at Glu-908–Leu-918 shows a compositional bias: polar residues. Ser-980 and Ser-1006 each carry phosphoserine; by PKA. The segment at Asp-981 to Arg-1042 is disordered.

Belongs to the GLI C2H2-type zinc-finger protein family. The full-length GLI3 form (GLI3FL) interacts with SUFU and this interaction regulates the formation of either repressor or activator forms of GLI3. Its association with SUFU is regulated by Hh signaling and dissociation of the SUFU-GLI3 interaction requires the presence of the ciliary motor KIF3A. Interacts with KIF7. The activator form of GLI3 (GLI3A) but not the repressor form (GLI3R) can interact with TRPS1. The phosphorylated form interacts with BTRC. Interacts with ZIC1. Interacts with ZIC3 (via C2H2-type domains 3, 4 and 5); the interaction enhances its transcriptional activity. Interacts with WRD11; the interaction associates EMX1 with GLI3. Interacts with DZIP1; retains GLI3 within the cytoplasm. Post-translationally, phosphorylated on multiple sites by protein kinase A (PKA) and phosphorylation by PKA primes further phosphorylation by CK1 and GSK3. Phosphorylated by DYRK2 (in vitro). Phosphorylation is essential for its proteolytic processing. In terms of processing, transcriptional repressor GLI3R, a C-terminally truncated form, is generated from the full-length GLI3 protein (GLI3FL/GLI3-190) through proteolytic processing. This process requires PKA-primed phosphorylation of GLI3, ubiquitination of GLI3 and the presence of BTRC. GLI3FL is complexed with SUFU in the cytoplasm and is maintained in a neutral state. Without the Hh signal, the SUFU-GLI3 complex is recruited to cilia, leading to the efficient processing of GLI3FL into GLI3R. GLI3R formation leads to its dissociation from SUFU, allowing it to translocate into the nucleus, and repress Hh target genes. When Hh signaling is initiated, SUFU dissociates from GLI3FL and this has two consequences. First, GLI3R production is halted. Second, free GLI3FL translocates to the nucleus, where it is phosphorylated, destabilized, and converted to a transcriptional activator (GLI3A). Phosphorylated in vitro by ULK3. In terms of tissue distribution, is expressed in a wide variety of normal adult tissues, including lung, colon, spleen, placenta, testis, and myometrium.

Its subcellular location is the nucleus. It is found in the cytoplasm. It localises to the cell projection. The protein resides in the cilium. Its function is as follows. Has a dual function as a transcriptional activator and a repressor of the sonic hedgehog (Shh) pathway, and plays a role in limb development. The full-length GLI3 form (GLI3FL) after phosphorylation and nuclear translocation, acts as an activator (GLI3A) while GLI3R, its C-terminally truncated form, acts as a repressor. A proper balance between the GLI3 activator and the repressor GLI3R, rather than the repressor gradient itself or the activator/repressor ratio gradient, specifies limb digit number and identity. In concert with TRPS1, plays a role in regulating the size of the zone of distal chondrocytes, in restricting the zone of PTHLH expression in distal cells and in activating chondrocyte proliferation. Binds to the minimal GLI-consensus sequence 5'-GGGTGGTC-3'. The protein is Transcriptional activator GLI3 (GLI3) of Homo sapiens (Human).